Reading from the N-terminus, the 288-residue chain is Elongation factor Ts (288 aa).

An involved in Mg(2+) ion dislocation from EF-Tu region spans residues 80 to 83 (TDFV).

The protein belongs to the EF-Ts family.

Its subcellular location is the cytoplasm. Associates with the EF-Tu.GDP complex and induces the exchange of GDP to GTP. It remains bound to the aminoacyl-tRNA.EF-Tu.GTP complex up to the GTP hydrolysis stage on the ribosome. In Chromobacterium violaceum (strain ATCC 12472 / DSM 30191 / JCM 1249 / CCUG 213 / NBRC 12614 / NCIMB 9131 / NCTC 9757 / MK), this protein is Elongation factor Ts.